The sequence spans 159 residues: 3-hydroxyacyl-[acyl-carrier-protein] dehydratase FabZ (159 aa).

The active site involves His58.

Belongs to the thioester dehydratase family. FabZ subfamily.

The protein localises to the cytoplasm. It catalyses the reaction a (3R)-hydroxyacyl-[ACP] = a (2E)-enoyl-[ACP] + H2O. In terms of biological role, involved in unsaturated fatty acids biosynthesis. Catalyzes the dehydration of short chain beta-hydroxyacyl-ACPs and long chain saturated and unsaturated beta-hydroxyacyl-ACPs. This Helicobacter pylori (strain Shi470) protein is 3-hydroxyacyl-[acyl-carrier-protein] dehydratase FabZ.